The primary structure comprises 349 residues: Terpene cyclase rstn5 (349 aa).

Helical transmembrane passes span Leu4 to Phe24, Phe81 to Ala101, Gly116 to Val136, Val158 to Phe178, and Gly181 to Leu201. A glycan (N-linked (GlcNAc...) asparagine) is linked at Asn222. Transmembrane regions (helical) follow at residues Val228–Gly248, Leu271–Ala291, and Thr309–Leu329.

Belongs to the membrane-bound ascI terpene cyclase family.

The protein resides in the membrane. Its pathway is antifungal biosynthesis. Cyclase; part of the gene cluster that mediates the biosynthesis of the tetrahydropyranyl antifungal agent restricticin that acts as an inhibitor of CYP51 and blocks the ergosterol biosynthesis. The highly reducing polyketide synthase rstn3, the short chain dehydrogenase rstn4, the cyclase rstn5, the FAD-dependent monooxygenase rstn6 and the enoylreductase rstn7 are required to generate the first stable intermediate desmethylrestrictinol. Rstn3 with rstn7 biosynthesize the first polyketide chain intermediate that is reduced by rstn4, followed by epoxidation by rstn6 before 6-endo cyclization via epoxide opening by rstn5 leads to desmethylrestrictinol. The methyltransferase rstn1 then catalyzes the C4 O-methylation of desmethylrestrictinol to produce restrictinol, and the nonribosomal peptide synthetase rstn8 catalyzes the C3 esterification of restrictinol with glycine that leads to restricticin. The polypeptide is Terpene cyclase rstn5 (Aspergillus nomiae NRRL (strain ATCC 15546 / NRRL 13137 / CBS 260.88 / M93)).